The chain runs to 456 residues: Bifunctional protein GlmU (456 aa).

The segment at 1–228 is pyrophosphorylase; the sequence is MSARLAAIVL…PQEIFGINDR (228 aa). UDP-N-acetyl-alpha-D-glucosamine-binding positions include 10–13, Lys-24, Gln-75, and 80–81; these read LAAG and GT. Residue Asp-105 coordinates Mg(2+). Residues Gly-142, Glu-157, Asn-172, and Asn-226 each coordinate UDP-N-acetyl-alpha-D-glucosamine. Asn-226 lines the Mg(2+) pocket. Residues 229-249 form a linker region; that stretch reads LQLSQASRILNERTLVGLMLS. An N-acetyltransferase region spans residues 250 to 456; it reads GVTIVDPLRV…KAPYERTEDG (207 aa). UDP-N-acetyl-alpha-D-glucosamine contacts are provided by Arg-331 and Lys-349. Residue His-361 is the Proton acceptor of the active site. Residues Tyr-364 and Asn-375 each contribute to the UDP-N-acetyl-alpha-D-glucosamine site. Residues Ala-378, 384 to 385, Ala-421, and Arg-437 contribute to the acetyl-CoA site; that span reads NY.

It in the N-terminal section; belongs to the N-acetylglucosamine-1-phosphate uridyltransferase family. The protein in the C-terminal section; belongs to the transferase hexapeptide repeat family. As to quaternary structure, homotrimer. Mg(2+) serves as cofactor.

The protein resides in the cytoplasm. The catalysed reaction is alpha-D-glucosamine 1-phosphate + acetyl-CoA = N-acetyl-alpha-D-glucosamine 1-phosphate + CoA + H(+). It carries out the reaction N-acetyl-alpha-D-glucosamine 1-phosphate + UTP + H(+) = UDP-N-acetyl-alpha-D-glucosamine + diphosphate. Its pathway is nucleotide-sugar biosynthesis; UDP-N-acetyl-alpha-D-glucosamine biosynthesis; N-acetyl-alpha-D-glucosamine 1-phosphate from alpha-D-glucosamine 6-phosphate (route II): step 2/2. It functions in the pathway nucleotide-sugar biosynthesis; UDP-N-acetyl-alpha-D-glucosamine biosynthesis; UDP-N-acetyl-alpha-D-glucosamine from N-acetyl-alpha-D-glucosamine 1-phosphate: step 1/1. It participates in bacterial outer membrane biogenesis; LPS lipid A biosynthesis. Functionally, catalyzes the last two sequential reactions in the de novo biosynthetic pathway for UDP-N-acetylglucosamine (UDP-GlcNAc). The C-terminal domain catalyzes the transfer of acetyl group from acetyl coenzyme A to glucosamine-1-phosphate (GlcN-1-P) to produce N-acetylglucosamine-1-phosphate (GlcNAc-1-P), which is converted into UDP-GlcNAc by the transfer of uridine 5-monophosphate (from uridine 5-triphosphate), a reaction catalyzed by the N-terminal domain. The sequence is that of Bifunctional protein GlmU from Gloeobacter violaceus (strain ATCC 29082 / PCC 7421).